Consider the following 452-residue polypeptide: uncharacterized protein (452 aa).

The region spanning 3–61 (KVKIGEKYEVDITSMGHEGEGVGRIDGIAVFVKGALKGERVIVEIEEVHKNYLKGYTVK) is the TRAM domain. 4 residues coordinate [4Fe-4S] cluster: cysteine 74, cysteine 80, cysteine 83, and cysteine 160. S-adenosyl-L-methionine is bound by residues glutamine 284, tyrosine 313, glutamate 334, and aspartate 382. Cysteine 409 acts as the Nucleophile in catalysis.

This sequence belongs to the class I-like SAM-binding methyltransferase superfamily. RNA M5U methyltransferase family.

This is an uncharacterized protein from Caldanaerobacter subterraneus subsp. tengcongensis (strain DSM 15242 / JCM 11007 / NBRC 100824 / MB4) (Thermoanaerobacter tengcongensis).